Consider the following 71-residue polypeptide: UPF0352 protein VCM66_1964 (71 aa).

This sequence belongs to the UPF0352 family.

The sequence is that of UPF0352 protein VCM66_1964 from Vibrio cholerae serotype O1 (strain M66-2).